Reading from the N-terminus, the 81-residue chain is UPF0349 protein SE_0633 (81 aa).

It belongs to the UPF0349 family.

In Staphylococcus epidermidis (strain ATCC 12228 / FDA PCI 1200), this protein is UPF0349 protein SE_0633.